The following is a 426-amino-acid chain: Mothers against decapentaplegic homolog 7 (426 aa).

The tract at residues 13-55 is disordered; it reads LWRSRAPGGEDEEEGAGGGGGGGELRGEGATDSRAHGAGGGGP. Basic and acidic residues predominate over residues 37–47; that stretch reads LRGEGATDSRA. N6-acetyllysine; alternate is present on residues Lys-64 and Lys-70. Residues Lys-64 and Lys-70 each participate in a glycyl lysine isopeptide (Lys-Gly) (interchain with G-Cter in ubiquitin); alternate cross-link. The MH1 domain occupies 64–207; it reads KAVRGAKGHH…LSRLCELESP (144 aa). Zn(2+) is bound by residues Cys-125, Cys-180, Cys-192, and His-197. The short motif at 208–211 is the PY-motif element; the sequence is PPPY. An important for interaction with SMURF2 region spans residues 208-217; the sequence is PPPYSRYPMD. Phosphoserine is present on Ser-249. Residues 261-426 enclose the MH2 domain; sequence WCVVAYWEEK…CWLEVIFNSR (166 aa).

This sequence belongs to the dwarfin/SMAD family. Interacts with WWP1. Interacts with COPS5. Interacts with NEDD4L. Interacts with STAMBP. Interacts with RNF111, AXIN1 and AXIN2. Interacts with PPP1R15A. Interacts (via MH2 domain) with EP300. Interacts with ACVR1B, SMURF1, SMURF2 and TGFBR1; SMAD7 recruits SMURF1 and SMURF2 to the TGF-beta receptor and regulates its degradation. Interacts with PDPK1 (via PH domain). Interacts with TSC22D1/TSC-22; the interaction requires TGF-beta and the interaction is inhibited by TGFBR1. In terms of processing, phosphorylation on Ser-249 does not affect its stability, nuclear localization or inhibitory function in TGFB signaling; however it affects its ability to regulate transcription. Phosphorylated by PDPK1. Post-translationally, ubiquitinated by WWP1. Polyubiquitinated by RNF111, which is enhanced by AXIN1 and promotes proteasomal degradation. In response to TGF-beta, ubiquitinated by SMURF1; which promotes its degradation. Acetylation prevents ubiquitination and degradation mediated by SMURF1. Ubiquitous with higher expression in the lung and vascular endothelium.

Its subcellular location is the nucleus. The protein resides in the cytoplasm. In terms of biological role, antagonist of signaling by TGF-beta (transforming growth factor) type 1 receptor superfamily members; has been shown to inhibit TGF-beta (Transforming growth factor) and activin signaling by associating with their receptors thus preventing SMAD2 access. Functions as an adapter to recruit SMURF2 to the TGF-beta receptor complex. Also acts by recruiting the PPP1R15A-PP1 complex to TGFBR1, which promotes its dephosphorylation. Positively regulates PDPK1 kinase activity by stimulating its dissociation from the 14-3-3 protein YWHAQ which acts as a negative regulator. The polypeptide is Mothers against decapentaplegic homolog 7 (SMAD7) (Homo sapiens (Human)).